The sequence spans 246 residues: Tyrosine recombinase XerD-like (246 aa).

In terms of domain architecture, Core-binding (CB) spans 1–72 (MINDINNFIE…AVNQFLFFLY (72 aa)). One can recognise a Tyr recombinase domain in the interval 84-246 (QETEKITLAQ…TPITLERYYR (163 aa)). Catalysis depends on residues K149 and R212. The active-site O-(3'-phospho-DNA)-tyrosine intermediate is the Y244.

This sequence belongs to the 'phage' integrase family. XerD-like subfamily.

It localises to the cytoplasm. Its function is as follows. Putative tyrosine recombinase. Not involved in the cutting and rejoining of the recombining DNA molecules on dif(SL) site. The chain is Tyrosine recombinase XerD-like from Streptococcus agalactiae serotype V (strain ATCC BAA-611 / 2603 V/R).